The chain runs to 334 residues: UL-16 binding protein 5 (334 aa).

Residues 1-25 (MAAAASPAFLLRLPLLLLLSSWCRT) form the signal peptide. Residues 26–223 (GLADPHSLCY…TMSSGTAQPR (198 aa)) are Extracellular-facing. Residues 29 to 117 (DPHSLCYDIT…IQLENYIPKE (89 aa)) are MHC class I alpha-1 like. A disulfide bond links cysteine 50 and cysteine 66. Asparagine 82 carries N-linked (GlcNAc...) asparagine glycosylation. The tract at residues 118–210 (PLTLQARMSC…MDSTLEPSAG (93 aa)) is MHC class I alpha-2 like. An intrachain disulfide couples cysteine 127 to cysteine 190. Glycine 218 is lipidated: GPI-anchor amidated glycine. A propeptide spans 219 to 334 (TAQPRATATT…YSEPLQVSIS (116 aa)) (removed in mature form). A helical membrane pass occupies residues 224–243 (ATATTLILCCLLIMCLLICS). Residues 244-334 (RHSLTQSHGH…YSEPLQVSIS (91 aa)) lie on the Cytoplasmic side of the membrane.

This sequence belongs to the MHC class I family. As to quaternary structure, interacts with KLRK1/NKG2D. In terms of assembly, (Microbial infection) In CMV-infected cells, interacts with the viral glycoprotein UL16; this interaction causes RAET1G retention in the endoplasmic reticulum and cis-Golgi and prevents binding to and activation of KLRK1/NKG2D, providing CMV with an immune evasion mechanism. In terms of processing, the functional form is cleaved C-terminally of the GPI-anchor and yields a 28 kDa protein. Isoform 1 is highly expressed in colon and in a number of tumor cell lines and highly restricted in normal tissues. Both isoforms are frequently expressed in cell lines derived from epithelial cancers, and in primary breast cancers.

The protein resides in the cell membrane. The protein localises to the endoplasmic reticulum. Its subcellular location is the secreted. Its function is as follows. Binds and activates the KLRK1/NKG2D receptor, mediating natural killer cell cytotoxicity. Down-regulates the expression of KLRK1 and stimulates natural killer cells to secrete IFNG. In terms of biological role, stimulates natural killer cells to secrete IFNG. This Homo sapiens (Human) protein is UL-16 binding protein 5.